Reading from the N-terminus, the 122-residue chain is Holo-[acyl-carrier-protein] synthase (122 aa).

Residues Asp-8 and Glu-57 each contribute to the Mg(2+) site.

Belongs to the P-Pant transferase superfamily. AcpS family. The cofactor is Mg(2+).

Its subcellular location is the cytoplasm. It catalyses the reaction apo-[ACP] + CoA = holo-[ACP] + adenosine 3',5'-bisphosphate + H(+). In terms of biological role, transfers the 4'-phosphopantetheine moiety from coenzyme A to a Ser of acyl-carrier-protein. This is Holo-[acyl-carrier-protein] synthase from Protochlamydia amoebophila (strain UWE25).